Here is a 485-residue protein sequence, read N- to C-terminus: MDRQPERENDELPSPAIISDRVLVNGVVTPLTLTAEGELRSTESGRRKSTLAKEILSFVVEGNKVRVKTLVEKGGGICCRGSAGDYARNDFVFEPLSDESRKLWSDKFHQHLVSLGRPKKLLVFVNPFGGKKTARKIFQEEVKPLFEDANIQLEIQETKYQLHAKEIVRSMDVSKYDGIVCVSGDGILVEVVNGLLEREDWKTAIKLPIGMVPAGSGNGMIKSLLEPVGLPCSATSATISIIRGRTRSLDVATISQGTTKFFSVLMLAWGLVADIDIESEKFRWMGSARFDIYGLQRIICLRQYHGRILFVPAPGFESYGQRASCSIDKEPSGSDKTLVYQGPDSKLENLDWREMKGPFVSVWLHNVPWGAENTLAAPDAKFSDGFLDLIVMKDCPKLALLSLMTKLSDGTHVQSPYASYLKVKAFVLEPGARIDEPDKEGIIDSDGEVLARGRKSYKCDQKALMSYDKLQISVDQGLATLFSPE.

The DAGKc domain occupies 116–258; it reads GRPKKLLVFV…LDVATISQGT (143 aa). Residues 126–128 and Thr158 each bind ATP; that span reads NPF. 183-186 serves as a coordination point for substrate; the sequence is SGDG. Residue Asp185 is the Proton donor/acceptor of the active site. ATP contacts are provided by residues Glu190 and 215–217; that span reads GSG. Substrate is bound at residue Asp276. ATP is bound by residues Arg283, Arg289, and 446–448; that span reads DGE.

Requires Mg(2+) as cofactor. In terms of tissue distribution, highly expressed in stems and flowers and at lower levels in roots, leaves and siliques.

Its subcellular location is the vacuole membrane. The enzyme catalyses a sphingoid base + ATP = a sphingoid 1-phosphate + ADP + H(+). Its activity is regulated as follows. Activated by phosphatidic acid (PA). Binding with PA stimulates the activity by promoting the binding of substrate to the catalytic site. Its function is as follows. Involved in the production of sphingolipid metabolites. Phosphorylates sphingosine and various sphingoid long-chain base (LCB) products, such as phytosphingosine (PHS, 4-hydroxysphinganine), 4-hydroxy-8-sphingenine, 4,8-sphingadienine, D-erythro-dihydrosphingosine and D,L-threo-dihydrosphingosine. Is required for abscisic acid (ABA) signaling that mediates stomatal closure, inhibition of seed germination and root elongation. May function upstream of PLDALPHA1 and phosphatidic acid (PA) in an amplification response to ABA that mediates stomatal closure. This chain is Sphingosine kinase 1 (SPHK1), found in Arabidopsis thaliana (Mouse-ear cress).